The following is a 198-amino-acid chain: Carnitine operon protein CaiE (198 aa).

The interval 179–198 (VEENRPRLKGTTDVKPKSAQ) is disordered. Positions 180–198 (EENRPRLKGTTDVKPKSAQ) are enriched in basic and acidic residues.

It belongs to the transferase hexapeptide repeat family.

The protein operates within amine and polyamine metabolism; carnitine metabolism. Its function is as follows. Overproduction of CaiE stimulates the activity of CaiB and CaiD. This chain is Carnitine operon protein CaiE, found in Salmonella choleraesuis (strain SC-B67).